An 84-amino-acid chain; its full sequence is Toxin To7 (84 aa).

The first 20 residues, 1-20 (MSIFPIVLALLLIGLEETEA), serve as a signal peptide directing secretion. The LCN-type CS-alpha/beta domain maps to 21–83 (LDGYPLSKIN…KMYPGSSPCY (63 aa)). Intrachain disulfides connect cysteine 32–cysteine 82, cysteine 36–cysteine 59, cysteine 42–cysteine 64, and cysteine 46–cysteine 66.

In terms of tissue distribution, expressed by the venom gland.

The protein localises to the secreted. Its function is as follows. Inhibits voltage-gated sodium channels (Nav). The sequence is that of Toxin To7 from Tityus obscurus (Amazonian scorpion).